We begin with the raw amino-acid sequence, 209 residues long: ATP-dependent Clp protease proteolytic subunit (209 aa).

S106 acts as the Nucleophile in catalysis. H131 is a catalytic residue.

Belongs to the peptidase S14 family. In terms of assembly, fourteen ClpP subunits assemble into 2 heptameric rings which stack back to back to give a disk-like structure with a central cavity, resembling the structure of eukaryotic proteasomes.

It is found in the cytoplasm. The enzyme catalyses Hydrolysis of proteins to small peptides in the presence of ATP and magnesium. alpha-casein is the usual test substrate. In the absence of ATP, only oligopeptides shorter than five residues are hydrolyzed (such as succinyl-Leu-Tyr-|-NHMec, and Leu-Tyr-Leu-|-Tyr-Trp, in which cleavage of the -Tyr-|-Leu- and -Tyr-|-Trp bonds also occurs).. Its function is as follows. Cleaves peptides in various proteins in a process that requires ATP hydrolysis. Has a chymotrypsin-like activity. Plays a major role in the degradation of misfolded proteins. In Caulobacter vibrioides (strain ATCC 19089 / CIP 103742 / CB 15) (Caulobacter crescentus), this protein is ATP-dependent Clp protease proteolytic subunit.